A 660-amino-acid chain; its full sequence is Iron(3+)-hydroxamate import system permease protein FhuB (660 aa).

Helical transmembrane passes span 5-25 (IALF…ALTW), 62-82 (LAIS…FQQV), 93-113 (LGVA…AIPG), 118-138 (QFAA…VAWG), 147-167 (ILAG…LVIF), 197-217 (QLLG…LMGL), 240-260 (AIVI…IGLF), 277-297 (LMLA…IILW), 303-323 (MEVS…LWLL), 348-368 (LAFA…ALSF), 391-411 (WPRI…GCII), 424-444 (VLGI…LVPG), 447-467 (FGWL…IIMI), 479-499 (MLLA…MLQA), 528-548 (GIVM…LTIL), 567-587 (IALL…IGPL), 607-627 (MPHI…ADWC), and 635-655 (FQIP…IYLL).

Belongs to the binding-protein-dependent transport system permease family. FecCD subfamily. In terms of assembly, the complex is composed of two ATP-binding proteins (FhuC), a transmembrane protein (FhuB) and a solute-binding protein (FhuD). FhuB interacts with FhuC. FhuB interacts with FhuD. FhuB binds substrate-loaded FhuD more strongly than FhuD alone.

The protein resides in the cell inner membrane. Functionally, part of the ABC transporter complex FhuCDB involved in iron(3+)-hydroxamate import. Responsible for the translocation of the substrate across the membrane. The protein is Iron(3+)-hydroxamate import system permease protein FhuB (fhuB) of Escherichia coli (strain K12).